The sequence spans 254 residues: MAVGKNKRLSKGKKGLKKRVVDPFSKKEWYDIKAPSTFKNRNVGKTLVNRSAGLKSASDTLKGRVVEACLADLQGSEDHSFRKIKLRVDEVQGKNLLTNIHGMDFTTDKYRSMVRKWQTLIEAQVTVKTSDEYVIRVFAIAFTRKQPNQVKKTCYAQSSHIRAIRKVFSEILTREVQNSTLAQFTSKLIPEVINKEMENATKDIFPLQNVHVRKVKLLKQPKFDLGSLMALHGEGSDETGKKVSGFKDEILETV.

Ala-2 is modified (N-acetylalanine; partial).

This sequence belongs to the eukaryotic ribosomal protein eS1 family. In terms of assembly, component of the small ribosomal subunit. Mature ribosomes consist of a small (40S) and a large (60S) subunit. The 40S subunit contains about 33 different proteins and 1 molecule of RNA (18S). The 60S subunit contains about 49 different proteins and 3 molecules of RNA (25S, 5.8S and 5S).

Its subcellular location is the cytoplasm. In Zygosaccharomyces rouxii (strain ATCC 2623 / CBS 732 / NBRC 1130 / NCYC 568 / NRRL Y-229), this protein is Small ribosomal subunit protein eS1.